The sequence spans 436 residues: 3-ketoacyl-CoA thiolase (436 aa).

Cysteine 99 acts as the Acyl-thioester intermediate in catalysis. Residues histidine 392 and cysteine 422 each act as proton acceptor in the active site.

The protein belongs to the thiolase-like superfamily. Thiolase family. Heterotetramer of two alpha chains (FadJ) and two beta chains (FadI).

The protein resides in the cytoplasm. It catalyses the reaction an acyl-CoA + acetyl-CoA = a 3-oxoacyl-CoA + CoA. Its pathway is lipid metabolism; fatty acid beta-oxidation. In terms of biological role, catalyzes the final step of fatty acid oxidation in which acetyl-CoA is released and the CoA ester of a fatty acid two carbons shorter is formed. The chain is 3-ketoacyl-CoA thiolase from Escherichia coli O127:H6 (strain E2348/69 / EPEC).